The following is a 108-amino-acid chain: Parvalbumin beta 1 (108 aa).

At A1 the chain carries N-acetylalanine. EF-hand domains are found at residues 38–73 (KXXDDVKKXXXVLDQDASGFLEVEELKLFLQNFCPK) and 77–108 (LTDAETKAFLKAGDADGDGMLGLDEFAVLVKQ). Ca(2+) contacts are provided by D51, D53, S55, F57, E59, E62, D90, D92, D94, M96, and E101.

Belongs to the parvalbumin family.

Its function is as follows. In muscle, parvalbumin is thought to be involved in relaxation after contraction. It binds two calcium ions. In Oncorhynchus mykiss (Rainbow trout), this protein is Parvalbumin beta 1.